The chain runs to 1172 residues: DNA-directed RNA polymerase subunit beta (1172 aa).

The protein belongs to the RNA polymerase beta chain family. In terms of assembly, the RNAP catalytic core consists of 2 alpha, 1 beta, 1 beta' and 1 omega subunit. When a sigma factor is associated with the core the holoenzyme is formed, which can initiate transcription.

It catalyses the reaction RNA(n) + a ribonucleoside 5'-triphosphate = RNA(n+1) + diphosphate. In terms of biological role, DNA-dependent RNA polymerase catalyzes the transcription of DNA into RNA using the four ribonucleoside triphosphates as substrates. The chain is DNA-directed RNA polymerase subunit beta from Mycobacterium sp. (strain KMS).